The primary structure comprises 135 residues: Small ribosomal subunit protein uS11 (135 aa).

It belongs to the universal ribosomal protein uS11 family. As to quaternary structure, part of the 30S ribosomal subunit. Interacts with proteins S7 and S18. Binds to IF-3.

Its function is as follows. Located on the platform of the 30S subunit, it bridges several disparate RNA helices of the 16S rRNA. Forms part of the Shine-Dalgarno cleft in the 70S ribosome. This chain is Small ribosomal subunit protein uS11, found in Polynucleobacter asymbioticus (strain DSM 18221 / CIP 109841 / QLW-P1DMWA-1) (Polynucleobacter necessarius subsp. asymbioticus).